A 932-amino-acid chain; its full sequence is Serine/threonine-protein kinase PknD (932 aa).

Residues Tyr-4 to Leu-291 enclose the Protein kinase domain. ATP contacts are provided by residues Ile-10 to Val-18 and Lys-33. Asp-138 (proton acceptor) is an active-site residue.

The protein belongs to the protein kinase superfamily. Ser/Thr protein kinase family. Post-translationally, autophosphorylated on serine and threonine residues.

It catalyses the reaction L-seryl-[protein] + ATP = O-phospho-L-seryl-[protein] + ADP + H(+). The catalysed reaction is L-threonyl-[protein] + ATP = O-phospho-L-threonyl-[protein] + ADP + H(+). In terms of biological role, together with the serine/threonine kinase Pkn1, may play a role in the specific interactions with host proteins during intracellular growth. This Chlamydia pneumoniae (Chlamydophila pneumoniae) protein is Serine/threonine-protein kinase PknD.